The chain runs to 708 residues: Fatty acid oxidation complex subunit alpha (708 aa).

Positions 1–190 are enoyl-CoA hydratase; the sequence is MSQDKAFTME…KAGLVTEVVP (190 aa). The interval 310–708 is 3-hydroxyacyl-CoA dehydrogenase; sequence DSVKRVGVLG…MLENGWNFYQ (399 aa).

The protein in the N-terminal section; belongs to the enoyl-CoA hydratase/isomerase family. This sequence in the central section; belongs to the 3-hydroxyacyl-CoA dehydrogenase family. As to quaternary structure, heterotetramer of two alpha chains (FadJ) and two beta chains (FadI).

It is found in the cytoplasm. It carries out the reaction a (3S)-3-hydroxyacyl-CoA = a (2E)-enoyl-CoA + H2O. The enzyme catalyses a 4-saturated-(3S)-3-hydroxyacyl-CoA = a (3E)-enoyl-CoA + H2O. It catalyses the reaction a (3S)-3-hydroxyacyl-CoA + NAD(+) = a 3-oxoacyl-CoA + NADH + H(+). The catalysed reaction is (3S)-3-hydroxybutanoyl-CoA = (3R)-3-hydroxybutanoyl-CoA. Its pathway is lipid metabolism; fatty acid beta-oxidation. Its function is as follows. Catalyzes the formation of a hydroxyacyl-CoA by addition of water on enoyl-CoA. Also exhibits 3-hydroxyacyl-CoA epimerase and 3-hydroxyacyl-CoA dehydrogenase activities. In Idiomarina loihiensis (strain ATCC BAA-735 / DSM 15497 / L2-TR), this protein is Fatty acid oxidation complex subunit alpha.